A 691-amino-acid polypeptide reads, in one-letter code: Protein-glutamine gamma-glutamyltransferase E (691 aa).

Y110 carries the post-translational modification Phosphotyrosine. T111 bears the Phosphothreonine mark. Ca(2+)-binding residues include A221, N224, N226, and D227. The active site involves C272. Residues D301, D303, N305, S307, and D324 each contribute to the Ca(2+) site. Residues H330 and D353 contribute to the active site. Residues N393, T414, E442, and E447 each coordinate Ca(2+).

The protein belongs to the transglutaminase superfamily. Transglutaminase family. In terms of assembly, consists of two polypeptide chains, which are synthesized as a precursor form of a single polypeptide. Ca(2+) serves as cofactor. Post-translationally, activated by proteolytic processing. In vitro activation is commonly achieved by cleavage with dispase, a neutral bacterial protease. Physiological activation may be catalyzed by CTSL and, to a lesser extent, by CTSS.

It localises to the cytoplasm. The catalysed reaction is L-glutaminyl-[protein] + L-lysyl-[protein] = [protein]-L-lysyl-N(6)-5-L-glutamyl-[protein] + NH4(+). Functionally, catalyzes the calcium-dependent formation of isopeptide cross-links between glutamine and lysine residues in various proteins, as well as the conjugation of polyamines to proteins. Involved in the formation of the cornified envelope (CE), a specialized component consisting of covalent cross-links of proteins beneath the plasma membrane of terminally differentiated keratinocytes. Catalyzes small proline-rich proteins and LOR cross-linking to form small interchain oligomers, which are further cross-linked by TGM1 onto the growing CE scaffold. In hair follicles, involved in cross-linking structural proteins to hardening the inner root sheath. The polypeptide is Protein-glutamine gamma-glutamyltransferase E (TGM3) (Bos taurus (Bovine)).